The primary structure comprises 667 residues: Flavin-dependent halogenase malA (667 aa).

His-48, Glu-70, Ile-79, and Ser-82 together coordinate FAD. The active site involves Lys-108. Arg-144, Val-168, Asp-399, and Ile-412 together coordinate FAD. Position 494 (Glu-494) interacts with substrate. Zn(2+) contacts are provided by Cys-597, Cys-600, Cys-613, and Cys-616. The interval 621–646 (TEPQTAVTFDPPLTAEEEALLYAAWN) is flexible region.

It belongs to the flavin-dependent halogenase family. It depends on Zn(2+) as a cofactor.

It catalyses the reaction (+)-premalbrancheamide + 2 FAD + 2 chloride + 4 H(+) = (+)-malbrancheamide + 2 FADH2. The catalysed reaction is (+)-premalbrancheamide + FAD + chloride + 2 H(+) = (+)-malbrancheamide B + FADH2. The enzyme catalyses (+)-premalbrancheamide + FAD + chloride + 2 H(+) = (+)-isomalbrancheamide B + FADH2. It carries out the reaction (+)-malbrancheamide B + FAD + chloride + 2 H(+) = (+)-malbrancheamide + FADH2. It catalyses the reaction (+)-isomalbrancheamide B + FAD + chloride + 2 H(+) = (+)-malbrancheamide + FADH2. The catalysed reaction is (+)-premalbrancheamide + bromide + FAD + 2 H(+) = (+)-malbrancheamide C + FADH2. The enzyme catalyses (+)-premalbrancheamide + bromide + FAD + 2 H(+) = (+)-isomalbrancheamide C + FADH2. It carries out the reaction (+)-malbrancheamide B + bromide + FAD + 2 H(+) = (+)-malbrancheamide D + FADH2. It catalyses the reaction (+)-isomalbrancheamide B + bromide + FAD + 2 H(+) = (+)-isomalbrancheamide D + FADH2. It participates in alkaloid biosynthesis. Flavin-dependent halogenase; part of the gene cluster that mediates the biosynthesis of malbrancheamide, a dichlorinated fungal indole alkaloid that belongs to a family of natural products containing a characteristic bicyclo[2.2.2]diazaoctane core. The first step of malbrancheamide biosynthesis involves coupling of L-proline and L-tryptophan by malG, a bimodular NRPS, to produce L-Pro-L-Trp aldehyde through reductive offloading. This compound undergoes spontaneous cyclization and dehydration to give a dienamine which is reverse prenylated at C-2 by malE. The other prenyltransferase present in the cluster, malB, displays modest activity, suggesting that may be a redundant gene in the pathway. Subsequently, a [4+2] Diels-Alder cyclo-addition catalyzed by the bifunctional enzyme malC forms the characteristic bicyclo[2.2.2]diazaoctane ring of premalbrancheamid. Finally, the flavin-dependent halogenase malA catalyzes the iterative dichlorination of the indole ring of premalbrancheamide to yield C-9 monochlorinated malbrancheamide B, C-8 monochlorinated isomalbrancheamide B, and dichlorinated malbrancheamide. MalA is also able to brominate premalbrancheamide at C-9 to yield malbrancheamide C, and, to a lesser extend, at C-8 to yield isomalbrancheamide C. Finally, malA can brominate C-9 monochlorinated malbrancheamide B at C-8 to yield malbrancheamide D, or C-8 monochlorinated isomalbrancheamide B at C-9 to produce isomalbrancheamide D. This chain is Flavin-dependent halogenase malA, found in Malbranchea aurantiaca.